Here is a 570-residue protein sequence, read N- to C-terminus: Putative pyruvate decarboxylase C3G9.11c (570 aa).

Pyruvate is bound by residues Asp-30 and His-119. Thiamine diphosphate contacts are provided by residues Thr-396 and 419 to 421 (GSI). A Mg(2+)-binding site is contributed by Asp-451. Residues 452 to 453 (GS) and 478 to 483 (NKGYTI) contribute to the thiamine diphosphate site. 2 residues coordinate Mg(2+): Asn-478 and Gly-480. Glu-484 contacts pyruvate.

The protein belongs to the TPP enzyme family. As to quaternary structure, homotetramer. The cofactor is Mg(2+). It depends on thiamine diphosphate as a cofactor.

It localises to the cytoplasm. It is found in the nucleus. The enzyme catalyses a 2-oxocarboxylate + H(+) = an aldehyde + CO2. It carries out the reaction pyruvate + H(+) = acetaldehyde + CO2. This is Putative pyruvate decarboxylase C3G9.11c from Schizosaccharomyces pombe (strain 972 / ATCC 24843) (Fission yeast).